The primary structure comprises 278 residues: Anamorsin homolog (278 aa).

The N-terminal SAM-like domain stretch occupies residues 1–147; sequence MESVSHLVSN…EIGSSAALPF (147 aa). Positions 147–191 are linker; the sequence is FANKISLGGNSKMETAKMWTLSSQDFVDDDIDIIDENTLIEEDDF. [2Fe-2S] cluster is bound by residues cysteine 204, cysteine 214, cysteine 217, and cysteine 219. The fe-S binding site A stretch occupies residues 204–219; it reads CDSAKKKRKACKNCSC. Residues cysteine 239, cysteine 242, cysteine 250, and cysteine 253 each contribute to the [4Fe-4S] cluster site. 2 short sequence motifs (cx2C motif) span residues 239 to 242 and 250 to 253; these read CGSC and CSSC. Residues 239-253 form a fe-S binding site B region; the sequence is CGSCYLGDAFRCSSC.

Belongs to the anamorsin family. In terms of assembly, monomer. The cofactor is [2Fe-2S] cluster. It depends on [4Fe-4S] cluster as a cofactor.

It localises to the cytoplasm. Its subcellular location is the mitochondrion intermembrane space. Its function is as follows. Component of the cytosolic iron-sulfur (Fe-S) protein assembly (CIA) machinery. Required for the maturation of extramitochondrial Fe-S proteins. Part of an electron transfer chain functioning in an early step of cytosolic Fe-S biogenesis, facilitating the de novo assembly of a [4Fe-4S] cluster on the cytosolic Fe-S scaffold complex. Electrons are transferred from NADPH via a FAD- and FMN-containing diflavin oxidoreductase. Together with the diflavin oxidoreductase, also required for the assembly of the diferric tyrosyl radical cofactor of ribonucleotide reductase (RNR), probably by providing electrons for reduction during radical cofactor maturation in the catalytic small subunit. This chain is Anamorsin homolog, found in Trichoplax adhaerens (Trichoplax reptans).